A 211-amino-acid chain; its full sequence is Guanylate kinase (211 aa).

Positions 5 to 185 constitute a Guanylate kinase-like domain; the sequence is GLLLILSSPS…AEEQLKMILS (181 aa). 12-19 lines the ATP pocket; it reads SPSGAGKS.

This sequence belongs to the guanylate kinase family.

The protein localises to the cytoplasm. It carries out the reaction GMP + ATP = GDP + ADP. In terms of biological role, essential for recycling GMP and indirectly, cGMP. This is Guanylate kinase from Cereibacter sphaeroides (strain ATCC 17023 / DSM 158 / JCM 6121 / CCUG 31486 / LMG 2827 / NBRC 12203 / NCIMB 8253 / ATH 2.4.1.) (Rhodobacter sphaeroides).